The sequence spans 363 residues: Pyrimidine monooxygenase RutA (363 aa).

FMN contacts are provided by residues 49–50 (IK), N115, E124, 140–141 (RY), and S190.

It belongs to the NtaA/SnaA/DszA monooxygenase family. RutA subfamily.

The enzyme catalyses uracil + FMNH2 + NADH + O2 = (Z)-3-ureidoacrylate + FMN + NAD(+) + H2O + H(+). It carries out the reaction thymine + FMNH2 + NADH + O2 = (Z)-2-methylureidoacrylate + FMN + NAD(+) + H2O + H(+). Catalyzes the pyrimidine ring opening between N-3 and C-4 by an unusual flavin hydroperoxide-catalyzed mechanism, adding oxygen atoms in the process to yield ureidoacrylate peracid, that immediately reacts with FMN forming ureidoacrylate and FMN-N(5)-oxide. The FMN-N(5)-oxide reacts spontaneously with NADH to produce FMN. Requires the flavin reductase RutF to regenerate FMN in vivo. In Escherichia coli O103:H2 (strain 12009 / EHEC), this protein is Pyrimidine monooxygenase RutA.